The sequence spans 762 residues: MAIQTSNLGYPRIGLQREWKKTLEAFWSNKINEEQFLTTMKEIRLQHVKVQQEKGIELIPIGDFTYYDHVLDTAYMLGFIPSRFSEFTSYLDVYFAMARGSKDHVASEMTKWFNTNYHYIVPEYEEGLQISLKDNRPLRLYEEAKQELGVDGKPVILGPYTFLKLAKGYTQEQFATILKQLVAPYVQLLSELHAAGAQIIQVDEPIFASLTKEEVQQAKEIYEAIRKEVPNATLLLQTYFDSVEENYEEIITFPVSSIGLDFVHGKEGNLNAVSKYGFPADKTLAVGCIDGRNIWRADLDEVLTLFTTLQKQVQTKDLIVQPSCSLLHTPIDKTEETHLSTELFDALAFANQKLEELVLIHSALTQGTESISNELETYRNVHHTIRSSAARNREDVKAARTALKEEDFSRPLPFEKRYELQQVALKLPLLPTTTIGSFPQTTEVRQTRKEWRNGIISNEQYEQFIEKETEKWIRYQEEIGLDVLVHGEFERTDMVEYFGERLAGFSFTKNGWVQSYGSRCVKPPVIYGDVAFINGMTIKETVYAQSLTEKVVKGMLTGPVTILNWSFVRNDIPRKEVSYQIALALRHEIELLESSGIRVIQVDEPALREGMPLKEKDWDAYITWAVQSFLLATSSVANETQIHTHMCYSNFEDIVDAIRALDADVISIETSRSHGEFIDTLKHTTYEKGIGLGVYDIHSPRVPSKDEMYKIVEQSLQVCDPKYFWINPDCGLKTRRTEEVIPALEHMVQAAKDARSLLKTNA.

5-methyltetrahydropteroyltri-L-glutamate contacts are provided by residues 17 to 20 (REWK) and Lys-111. L-homocysteine contacts are provided by residues 435–437 (IGS) and Glu-488. Residues 435-437 (IGS) and Glu-488 each bind L-methionine. 5-methyltetrahydropteroyltri-L-glutamate contacts are provided by residues 519–520 (RC) and Trp-565. Asp-603 lines the L-homocysteine pocket. An L-methionine-binding site is contributed by Asp-603. Residue Glu-609 participates in 5-methyltetrahydropteroyltri-L-glutamate binding. The Zn(2+) site is built by His-645, Cys-647, and Glu-669. The Proton donor role is filled by His-698. A Zn(2+)-binding site is contributed by Cys-730.

This sequence belongs to the vitamin-B12 independent methionine synthase family. The cofactor is Zn(2+).

It catalyses the reaction 5-methyltetrahydropteroyltri-L-glutamate + L-homocysteine = tetrahydropteroyltri-L-glutamate + L-methionine. It participates in amino-acid biosynthesis; L-methionine biosynthesis via de novo pathway; L-methionine from L-homocysteine (MetE route): step 1/1. Catalyzes the transfer of a methyl group from 5-methyltetrahydrofolate to homocysteine resulting in methionine formation. This is 5-methyltetrahydropteroyltriglutamate--homocysteine methyltransferase from Bacillus anthracis (strain CDC 684 / NRRL 3495).